The following is a 130-amino-acid chain: Bet1-like SNARE 1-2 (130 aa).

Topologically, residues 1 to 106 (MNFRRENRAS…EKKSNRKSCK (106 aa)) are cytoplasmic. One can recognise a t-SNARE coiled-coil homology domain in the interval 33 to 95 (AHDERDNDEA…SGTINRFKLV (63 aa)). A coiled-coil region spans residues 40 to 82 (DEALENLQDRVSFLKRVTGDIHEEVENHNRLLDKVGNKMDSAR). Residues 107–122 (LIAYFVLLFLIMYYLI) traverse the membrane as a helical; Anchor for type IV membrane protein segment. At 123 to 130 (RLLNYIKG) the chain is on the vesicular side.

The protein belongs to the BET1 family.

It is found in the golgi apparatus membrane. It localises to the endoplasmic reticulum membrane. Functionally, required for vesicular transport from the ER to the Golgi complex. Functions as a SNARE associated with ER-derived vesicles. This is Bet1-like SNARE 1-2 (BET12) from Arabidopsis thaliana (Mouse-ear cress).